The chain runs to 165 residues: Large ribosomal subunit protein bL17 (165 aa).

Residues 138 to 158 (QEKREAQEKAREEKRTARKSD) show a composition bias toward basic and acidic residues. Positions 138 to 165 (QEKREAQEKAREEKRTARKSDSVPARKK) are disordered.

This sequence belongs to the bacterial ribosomal protein bL17 family. Part of the 50S ribosomal subunit. Contacts protein L32.

This is Large ribosomal subunit protein bL17 from Leptospira borgpetersenii serovar Hardjo-bovis (strain JB197).